Reading from the N-terminus, the 493-residue chain is Vinyl phenol reductase (493 aa).

FAD-binding residues include Ala19, Glu38, Ser46, Thr50, Gly52, Ala156, Asp224, Asn448, and Val467.

Belongs to the FAD-dependent oxidoreductase 2 family. FRD/SDH subfamily. Requires FAD as cofactor.

The enzyme catalyses 4-vinylphenol + NADH + H(+) = 4-ethylphenol + NAD(+). It carries out the reaction 3,4-dihydroxystyrene + NADH + H(+) = 4-ethylcatechol + NAD(+). The catalysed reaction is 2-methoxy-4-vinylphenol + NADH + H(+) = 4-ethyl-2-methoxyphenol + NAD(+). Functionally, involved in the production of ethylphenols during the degradation of hydroxycinnamic acids. Catalyzes the reduction of vinylphenols (4-vinylphenol (4-hydroxystyrene), 4-vinylcatechol (3,4-dihydroxystyrene), and 4-vinylguaiacol (2-methoxy-4-vinylphenol)) to their corresponding ethylphenols (4-ethylphenol, 4-ethylcatechol, and 4-ethylguaiacol, respectively) in the presence of NADH. These compounds are considered the most important flavor components of fermented soy sauce, and, on the other hand, are considered off flavor and responsible for sensorial wine and cider alteration. The 4-ethylphenol produced by the gut bacteria L.plantarum strain WCFS1 can get subsequent sulfation to 4-ethylphenyl sulfate (4EPS) by host sulfotransferase (SULT1A1); 4EPS can enter the brain and seems to alter brain activity. Therefore, this enzyme likely plays a role in gut microbiota-host metabolic interactions. In Lactiplantibacillus plantarum (strain ATCC BAA-793 / NCIMB 8826 / WCFS1) (Lactobacillus plantarum), this protein is Vinyl phenol reductase.